A 197-amino-acid polypeptide reads, in one-letter code: Probable molybdenum cofactor guanylyltransferase (197 aa).

Residues 12–14 (LAG), lysine 24, aspartate 71, and aspartate 103 contribute to the GTP site. Residue aspartate 103 participates in Mg(2+) binding.

This sequence belongs to the MobA family. Mg(2+) is required as a cofactor.

It is found in the cytoplasm. It catalyses the reaction Mo-molybdopterin + GTP + H(+) = Mo-molybdopterin guanine dinucleotide + diphosphate. Transfers a GMP moiety from GTP to Mo-molybdopterin (Mo-MPT) cofactor (Moco or molybdenum cofactor) to form Mo-molybdopterin guanine dinucleotide (Mo-MGD) cofactor. The chain is Probable molybdenum cofactor guanylyltransferase from Mycobacterium avium (strain 104).